Consider the following 476-residue polypeptide: 23S rRNA (uracil(1939)-C(5))-methyltransferase RlmD (476 aa).

The TRAM domain maps to 1-55 (MVDEVLKIESLDLEARGIARRDGKVVFVEGALPGERVYAATVRRKPSYEIARVET). [4Fe-4S] cluster contacts are provided by Cys-68, Cys-74, Cys-77, and Cys-156. S-adenosyl-L-methionine contacts are provided by Gln-265, Phe-294, Asn-299, Glu-315, Asn-343, and Asp-364. The active-site Nucleophile is Cys-394.

The protein belongs to the class I-like SAM-binding methyltransferase superfamily. RNA M5U methyltransferase family. RlmD subfamily.

It carries out the reaction uridine(1939) in 23S rRNA + S-adenosyl-L-methionine = 5-methyluridine(1939) in 23S rRNA + S-adenosyl-L-homocysteine + H(+). Catalyzes the formation of 5-methyl-uridine at position 1939 (m5U1939) in 23S rRNA. The polypeptide is 23S rRNA (uracil(1939)-C(5))-methyltransferase RlmD (Bordetella avium (strain 197N)).